The chain runs to 276 residues: Mediator of RNA polymerase II transcription subunit 7 (276 aa).

Composition is skewed to basic and acidic residues over residues Met-1–Glu-11 and Phe-234–Gln-263. 2 disordered regions span residues Met-1–Phe-27 and Phe-234–Gln-276.

This sequence belongs to the Mediator complex subunit 7 family. In terms of assembly, component of the Mediator complex.

The protein resides in the nucleus. In terms of biological role, component of the Mediator complex, a coactivator involved in the regulated transcription of nearly all RNA polymerase II-dependent genes. Mediator functions as a bridge to convey information from gene-specific regulatory proteins to the basal RNA polymerase II transcription machinery. Mediator is recruited to promoters by direct interactions with regulatory proteins and serves as a scaffold for the assembly of a functional preinitiation complex with RNA polymerase II and the general transcription factors. In Phaeosphaeria nodorum (strain SN15 / ATCC MYA-4574 / FGSC 10173) (Glume blotch fungus), this protein is Mediator of RNA polymerase II transcription subunit 7 (MED7).